Consider the following 574-residue polypeptide: Proline--tRNA ligase (574 aa).

This sequence belongs to the class-II aminoacyl-tRNA synthetase family. ProS type 1 subfamily. As to quaternary structure, homodimer.

It localises to the cytoplasm. It catalyses the reaction tRNA(Pro) + L-proline + ATP = L-prolyl-tRNA(Pro) + AMP + diphosphate. Catalyzes the attachment of proline to tRNA(Pro) in a two-step reaction: proline is first activated by ATP to form Pro-AMP and then transferred to the acceptor end of tRNA(Pro). As ProRS can inadvertently accommodate and process non-cognate amino acids such as alanine and cysteine, to avoid such errors it has two additional distinct editing activities against alanine. One activity is designated as 'pretransfer' editing and involves the tRNA(Pro)-independent hydrolysis of activated Ala-AMP. The other activity is designated 'posttransfer' editing and involves deacylation of mischarged Ala-tRNA(Pro). The misacylated Cys-tRNA(Pro) is not edited by ProRS. This is Proline--tRNA ligase from Teredinibacter turnerae (strain ATCC 39867 / T7901).